The sequence spans 220 residues: Membrane steroid-binding protein 1 (220 aa).

A helical transmembrane segment spans residues Val22 to Phe42. In terms of domain architecture, Cytochrome b5 heme-binding spans Glu74–Lys171. Positions Glu74 to Lys171 are steroid-binding. Residues Gly174–Glu220 are disordered. The segment covering Glu178 to Gly200 has biased composition (polar residues). The span at Val203–Glu220 shows a compositional bias: basic and acidic residues.

It belongs to the cytochrome b5 family. MAPR subfamily. As to quaternary structure, interacts with BAK1 (via extracellular region). As to expression, expressed in cotyledons, stems, roots, leaves, flower and silique stalks, pistils and stigmas, but not in anthers.

The protein resides in the cell membrane. It is found in the endosome membrane. Functionally, MSBP1 can bind to multiple steroid compounds with different affinities. Negatively regulates cell elongation and brassinosteroid signaling. May act as a coreceptor with BAK1 and enhances its endocytosis. This is Membrane steroid-binding protein 1 (MSBP1) from Arabidopsis thaliana (Mouse-ear cress).